We begin with the raw amino-acid sequence, 77 residues long: Exodeoxyribonuclease 7 small subunit (77 aa).

This sequence belongs to the XseB family. In terms of assembly, heterooligomer composed of large and small subunits.

It is found in the cytoplasm. The catalysed reaction is Exonucleolytic cleavage in either 5'- to 3'- or 3'- to 5'-direction to yield nucleoside 5'-phosphates.. In terms of biological role, bidirectionally degrades single-stranded DNA into large acid-insoluble oligonucleotides, which are then degraded further into small acid-soluble oligonucleotides. This is Exodeoxyribonuclease 7 small subunit from Chromobacterium violaceum (strain ATCC 12472 / DSM 30191 / JCM 1249 / CCUG 213 / NBRC 12614 / NCIMB 9131 / NCTC 9757 / MK).